The sequence spans 401 residues: 8-amino-7-oxononanoate synthase (401 aa).

A substrate-binding site is contributed by arginine 24. Residue 111 to 112 (GF) participates in pyridoxal 5'-phosphate binding. Histidine 137 serves as a coordination point for substrate. Positions 183, 211, and 240 each coordinate pyridoxal 5'-phosphate. At lysine 243 the chain carries N6-(pyridoxal phosphate)lysine. Substrate is bound at residue threonine 357.

This sequence belongs to the class-II pyridoxal-phosphate-dependent aminotransferase family. BioF subfamily. As to quaternary structure, homodimer. Pyridoxal 5'-phosphate serves as cofactor.

It carries out the reaction 6-carboxyhexanoyl-[ACP] + L-alanine + H(+) = (8S)-8-amino-7-oxononanoate + holo-[ACP] + CO2. It participates in cofactor biosynthesis; biotin biosynthesis. Its function is as follows. Catalyzes the decarboxylative condensation of pimeloyl-[acyl-carrier protein] and L-alanine to produce 8-amino-7-oxononanoate (AON), [acyl-carrier protein], and carbon dioxide. This chain is 8-amino-7-oxononanoate synthase, found in Xanthomonas campestris pv. campestris (strain B100).